The primary structure comprises 78 residues: Putative membrane protein insertion efficiency factor (78 aa).

Belongs to the UPF0161 family.

It is found in the cell membrane. In terms of biological role, could be involved in insertion of integral membrane proteins into the membrane. The chain is Putative membrane protein insertion efficiency factor from Bacillus anthracis (strain A0248).